The primary structure comprises 204 residues: CASP-like protein 2U2 (204 aa).

Over 1-36 the chain is Cytoplasmic; it reads MGVLGGDAHVPIGSQVSPGSVVVTNNESFGHRKLLK. A helical transmembrane segment spans residues 37–57; that stretch reads GVDFLVRIKAFAFCLAVIVLL. The Extracellular portion of the chain corresponds to 58–84; sequence KNNVQTTVIAPGIVLQAKYNNTKAPVS. The N-linked (GlcNAc...) asparagine glycan is linked to Asn77. The chain crosses the membrane as a helical span at residues 85 to 105; sequence LLVLASICCGYAFLQAVVSLL. Topologically, residues 106–117 are cytoplasmic; that stretch reads SFIRDKRVLNNT. A helical transmembrane segment spans residues 118-138; that stretch reads VLAWLTFLLDQVLTYLLLGSA. Residues 139-170 are Extracellular-facing; sequence AATAEAAYIAKRGEDKVQWKAVCGPFKRFCDH. Residues 171 to 191 form a helical membrane-spanning segment; the sequence is FAATVFLSFIAVIAFAVSAAI. Residues 192 to 204 lie on the Cytoplasmic side of the membrane; it reads SAYYLFRKSKGFK.

It belongs to the Casparian strip membrane proteins (CASP) family. In terms of assembly, homodimer and heterodimers.

The protein localises to the cell membrane. The polypeptide is CASP-like protein 2U2 (Selaginella moellendorffii (Spikemoss)).